A 184-amino-acid chain; its full sequence is Small ribosomal subunit protein uS4 (184 aa).

Residues 108-172 form the S4 RNA-binding domain; sequence RRLQTQVHRL…SPMTKESHPE (65 aa). Residues 163–184 are disordered; sequence SPMTKESHPERPAQIAASVVEE.

It belongs to the universal ribosomal protein uS4 family. As to quaternary structure, part of the 30S ribosomal subunit. Contacts protein S5. The interaction surface between S4 and S5 is involved in control of translational fidelity.

Functionally, one of the primary rRNA binding proteins, it binds directly to 16S rRNA where it nucleates assembly of the body of the 30S subunit. Its function is as follows. With S5 and S12 plays an important role in translational accuracy. In Methanococcoides burtonii (strain DSM 6242 / NBRC 107633 / OCM 468 / ACE-M), this protein is Small ribosomal subunit protein uS4.